A 577-amino-acid chain; its full sequence is Peroxynitrite isomerase THAP4 (577 aa).

A THAP-type zinc finger spans residues 1-85 (MVICCAAVNC…LKPTAVPSIF (85 aa)). The disordered stretch occupies residues 84–221 (IFHLTEKKRG…DKSGISMDDF (138 aa)). Low complexity predominate over residues 157 to 170 (AAQEAASQEQAQQA). S163 is subject to Phosphoserine. The short motif at 235-238 (LHSY) is the HCFC1-binding motif (HBM) element. S239 is modified (phosphoserine). The interval 240 to 324 (FSSKHTRERP…AVQSEHSDAS (85 aa)) is disordered. Basic and acidic residues predominate over residues 247–266 (ERPSVPREPIDRKRLKKDVE). A compositionally biased stretch (low complexity) spans 290–300 (TATPQKPSQSP). Positions 415-577 (PPKMNPVVEP…LHVTYKKVTP (163 aa)) are nitrobindin. Residues T444 and H567 each contribute to the heme b site.

In the C-terminal section; belongs to the nitrobindin family. Homodimer. It depends on heme b as a cofactor.

The protein resides in the cytoplasm. Its subcellular location is the nucleus. It catalyses the reaction peroxynitrite = nitrate. It participates in nitrogen metabolism. In terms of biological role, heme-binding protein able to scavenge peroxynitrite and to protect free L-tyrosine against peroxynitrite-mediated nitration, by acting as a peroxynitrite isomerase that converts peroxynitrite to nitrate. Therefore, this protein likely plays a role in peroxynitrite sensing and in the detoxification of reactive nitrogen and oxygen species (RNS and ROS, respectively). Is able to bind nitric oxide (NO) in vitro, but may act as a sensor of peroxynitrite levels in vivo, possibly modulating the transcriptional activity residing in the N-terminal region. In Homo sapiens (Human), this protein is Peroxynitrite isomerase THAP4.